Here is a 65-residue protein sequence, read N- to C-terminus: uncharacterized protein (65 aa).

The next 2 membrane-spanning stretches (helical) occupy residues 12–31 and 41–63; these read IVKWLIFTILLVASISLIVV and LVARATPLAIVVGLSAIAAAIIV.

The protein resides in the cell membrane. This is an uncharacterized protein from Halalkalibacterium halodurans (strain ATCC BAA-125 / DSM 18197 / FERM 7344 / JCM 9153 / C-125) (Bacillus halodurans).